Reading from the N-terminus, the 333-residue chain is Starch-binding domain-containing protein 1 (333 aa).

The Extracellular portion of the chain corresponds to 1–6 (MGAVWS). A helical membrane pass occupies residues 7 to 23 (ALLVGGGLAGALILWLL). Residues 24-333 (RGDSGAPGKD…KVVHGWWGIH (310 aa)) are Cytoplasmic-facing. Disordered regions lie at residues 31 to 73 (GKDG…ELVS) and 106 to 139 (NARE…RVGE). Residues 50–61 (PGGGPGGGGSGG) are compositionally biased toward gly residues. S67 carries the post-translational modification Phosphoserine. Polar residues predominate over residues 124-134 (NSETSRNQSPE). Phosphoserine is present on residues S135 and S162. The LIR signature appears at 181–187 (HEDWEVV). Residues S191, S192, S201, S205, S208, S216, and S219 each carry the phosphoserine modification. The 100-residue stretch at 233 to 332 (SVKPRQVSIQ…DKVVHGWWGI (100 aa)) folds into the CBM20 domain.

In terms of assembly, interacts with the ATG8 family proteins GABARAP and GABARAPL1. Interacts with several glycogen-associated proteins, such as GYS2 (liver glycogen synthase), GDE (glycogen debranching enzyme), GBE1 (glycogen branching enzyme 1) and EPM2A (Laforin). In terms of processing, ubiquitinated, which leads to proteasomal degradation.

The protein localises to the preautophagosomal structure membrane. The protein resides in the endoplasmic reticulum membrane. It is found in the cell membrane. It localises to the sarcolemma. Its subcellular location is the T-tubule. In terms of biological role, acts as a cargo receptor for glycogen. Delivers its cargo to an autophagic pathway called glycophagy, resulting in the transport of glycogen to lysosomes. The polypeptide is Starch-binding domain-containing protein 1 (Rattus norvegicus (Rat)).